The primary structure comprises 264 residues: Phosphoribosylaminoimidazole-succinocarboxamide synthase 1 (264 aa).

It belongs to the SAICAR synthetase family.

It catalyses the reaction 5-amino-1-(5-phospho-D-ribosyl)imidazole-4-carboxylate + L-aspartate + ATP = (2S)-2-[5-amino-1-(5-phospho-beta-D-ribosyl)imidazole-4-carboxamido]succinate + ADP + phosphate + 2 H(+). The protein operates within purine metabolism; IMP biosynthesis via de novo pathway; 5-amino-1-(5-phospho-D-ribosyl)imidazole-4-carboxamide from 5-amino-1-(5-phospho-D-ribosyl)imidazole-4-carboxylate: step 1/2. This is Phosphoribosylaminoimidazole-succinocarboxamide synthase 1 (purC1) from Mesorhizobium japonicum (strain LMG 29417 / CECT 9101 / MAFF 303099) (Mesorhizobium loti (strain MAFF 303099)).